Here is a 260-residue protein sequence, read N- to C-terminus: Phosphate import ATP-binding protein PstB 1 (260 aa).

Positions Val13–Ile255 constitute an ABC transporter domain. An ATP-binding site is contributed by Gly45–Ser52.

Belongs to the ABC transporter superfamily. Phosphate importer (TC 3.A.1.7) family. In terms of assembly, the complex is composed of two ATP-binding proteins (PstB), two transmembrane proteins (PstC and PstA) and a solute-binding protein (PstS).

Its subcellular location is the cell inner membrane. The enzyme catalyses phosphate(out) + ATP + H2O = ADP + 2 phosphate(in) + H(+). Part of the ABC transporter complex PstSACB involved in phosphate import. Responsible for energy coupling to the transport system. The sequence is that of Phosphate import ATP-binding protein PstB 1 from Chromohalobacter salexigens (strain ATCC BAA-138 / DSM 3043 / CIP 106854 / NCIMB 13768 / 1H11).